Consider the following 224-residue polypeptide: UPF0758 protein PM1152 (224 aa).

The MPN domain occupies 102–224; sequence AFKNSENVRF…YYSFAENRLL (123 aa). Residues H173, H175, and D186 each coordinate Zn(2+). A JAMM motif motif is present at residues 173–186; the sequence is HNHPSGNPEPSASD.

This sequence belongs to the UPF0758 family.

The chain is UPF0758 protein PM1152 from Pasteurella multocida (strain Pm70).